Reading from the N-terminus, the 248-residue chain is Type III pantothenate kinase (248 aa).

6–13 (DCGNSFIK) provides a ligand contact to ATP. Residues tyrosine 92 and 99–102 (GLDR) each bind substrate. Catalysis depends on aspartate 101, which acts as the Proton acceptor. K(+) is bound at residue aspartate 121. ATP is bound at residue threonine 124. Threonine 180 contacts substrate.

This sequence belongs to the type III pantothenate kinase family. Homodimer. It depends on NH4(+) as a cofactor. Requires K(+) as cofactor.

Its subcellular location is the cytoplasm. The enzyme catalyses (R)-pantothenate + ATP = (R)-4'-phosphopantothenate + ADP + H(+). Its pathway is cofactor biosynthesis; coenzyme A biosynthesis; CoA from (R)-pantothenate: step 1/5. Functionally, catalyzes the phosphorylation of pantothenate (Pan), the first step in CoA biosynthesis. The sequence is that of Type III pantothenate kinase from Ectopseudomonas mendocina (strain ymp) (Pseudomonas mendocina).